The primary structure comprises 194 residues: Probable GTP-binding protein EngB (194 aa).

The 173-residue stretch at 22 to 194 (DLPEYALAGR…AWQFIKEGME (173 aa)) folds into the EngB-type G domain. GTP is bound by residues 30 to 37 (GRSNVGKS), 57 to 61 (GKTQT), 75 to 78 (DVPG), 142 to 145 (TKAD), and 174 to 176 (FSS). Positions 37 and 59 each coordinate Mg(2+).

The protein belongs to the TRAFAC class TrmE-Era-EngA-EngB-Septin-like GTPase superfamily. EngB GTPase family. The cofactor is Mg(2+).

In terms of biological role, necessary for normal cell division and for the maintenance of normal septation. This is Probable GTP-binding protein EngB from Listeria monocytogenes serotype 4b (strain CLIP80459).